The primary structure comprises 476 residues: Protein EARLY HEADING DATE 2 (476 aa).

Over residues 1 to 13 the composition is skewed to polar residues; it reads MLLSDLSSDQEAT. The disordered stretch occupies residues 1–27; it reads MLLSDLSSDQEATGSNSHGGGGGGDRM. C2H2-type zinc fingers lie at residues 106 to 128 and 156 to 186; these read FVCE…RRGH and YVCP…SRKH. 2 consecutive short sequence motifs (nuclear localization signal) follow at residues 124-131 and 178-185; these read HRRGHNLP and IKKHFSRK. The segment at 191 to 214 adopts a C2H2-type 2; degenerate zinc-finger fold; that stretch reads WRCERCGKRYAVHSDWKAHVKNCG. Cys193, Cys196, His209, Cys213, Cys220, Cys222, His235, and Cys239 together coordinate Zn(2+). Residues 218–241 form a CCHC-type 2; atypical zinc finger; sequence YRCDCGILFSRKDSLLTHRAFCDA. Residues 228–240 form an SHR-binding region; the sequence is RKDSLLTHRAFCD.

It is found in the nucleus. Transcription activator that acts as a flowering master switch in both long and short days, independently of the circadian clock. Promotes flowering upstream of HD1 by up-regulating FTL1, FTL4, FTL5, FTL6, EHD1, HD3A and RFT1. Seems to repress FTL11 expression. May recognize the consensus motif 5'-TTTGTCGTAAT-3' in target gene promoters. The chain is Protein EARLY HEADING DATE 2 from Oryza sativa subsp. indica (Rice).